Consider the following 146-residue polypeptide: Hemoglobin subunit beta-1 (146 aa).

The Globin domain occupies 2-146 (HWTAEEKQLI…VAHALARRYH (145 aa)). The heme b site is built by His-63 and His-92.

Belongs to the globin family. As to quaternary structure, heterotetramer of two alpha chains and two beta chains. In terms of tissue distribution, red blood cells.

Functionally, involved in oxygen transport from the lung to the various peripheral tissues. This chain is Hemoglobin subunit beta-1 (HBB1), found in Iguana iguana (Common iguana).